The primary structure comprises 535 residues: Unconventional prefoldin RPB5 interactor 1 (535 aa).

The residue at position 1 (M1) is an N-acetylmethionine. 4 disordered regions span residues 1-23 (MEAP…PALV), 223-330 (LLGE…VGDN), 352-383 (KNTT…QELP), and 412-431 (SRSR…AAEF). Residues 7-18 (ETPPDPSPPSAP) show a composition bias toward pro residues. 2 stretches are compositionally biased toward polar residues: residues 253 to 265 (TNVN…TDSH) and 276 to 296 (EPFS…SSSY). Over residues 299–320 (DDDDDDDDDDDDDNIDDDDGDN) the composition is skewed to acidic residues. S372 bears the Phosphoserine; by RPS6KB1 mark. T373 is modified (phosphothreonine). Positions 417–427 (NSVCSDTSESS) are enriched in polar residues. Residue S442 is modified to Phosphoserine.

It belongs to the RNA polymerase II subunit 5-mediating protein family. As to quaternary structure, homodimer. Component of the PAQosome complex which is responsible for the biogenesis of several protein complexes and which consists of R2TP complex members RUVBL1, RUVBL2, RPAP3 and PIH1D1, URI complex members PFDN2, PFDN6, PDRG1, UXT and URI1 as well as ASDURF, POLR2E and DNAAF10/WDR92. Interacts with POLR2E/RPB5, RUVBL2 and RUVBL1. Interacts with PFDN2, PFDN4 and STAP1; the interactions are phosphorylation-dependent and occur in a growth-dependent manner in the mitochondrion. Interacts with UXT. Interacts with PPP1CC; the interaction is phosphorylation-dependent and occurs in a growth factor-dependent manner. Interacts (via the middle C-terminal region) with GTF2F1 and GTF2F2. Interacts with DMAP1. Interacts with TSC1 and TSC2. Interacts with PRPF8 and EFTUD2 in a ZNHIT2-dependent manner. Post-translationally, phosphorylated. Phosphorylation occurs essentially on serine residues. Phosphorylation occurs in response to androgen treatment in prostate cancer cells in a mTOR-dependent manner. Phosphorylated; hyperhosphorylated in mitochondria in a mTORC-dependent signaling pathway. Phosphorylated at Ser-372 by RPS6KB1 in a growth factor- and rapamycin-dependent manner. S6K1-mediated mitochondrial phosphorylation at Ser-372 disrupts the URI1-PPP1CC complex in the mitochondrion, relieves PPP1CC phosphatase inhibition activity and hence engages a negative feedback diminishing RPS6KB1 kinase activity, preventing sustained S6K1-dependent signaling. As to expression, ubiquitous. Expressed in ovarian cancers (at protein level). Expressed strongly in skeletal muscle. Expressed weakly in brain, heart, pancreas and in prostate epithelial cells.

The protein resides in the nucleus. It localises to the cytoplasm. The protein localises to the mitochondrion. Its subcellular location is the cell projection. It is found in the dendrite. Its function is as follows. Involved in gene transcription regulation. Acts as a transcriptional repressor in concert with the corepressor UXT to regulate androgen receptor (AR) transcription. May act as a tumor suppressor to repress AR-mediated gene transcription and to inhibit anchorage-independent growth in prostate cancer cells. Required for cell survival in ovarian cancer cells. Together with UXT, associates with chromatin to the NKX3-1 promoter region. Antagonizes transcriptional modulation via hepatitis B virus X protein. In terms of biological role, plays a central role in maintaining S6K1 signaling and BAD phosphorylation under normal growth conditions thereby protecting cells from potential deleterious effects of sustained S6K1 signaling. The URI1-PPP1CC complex acts as a central component of a negative feedback mechanism that counteracts excessive S6K1 survival signaling to BAD in response to growth factors. Mediates inhibition of PPP1CC phosphatase activity in mitochondria. Coordinates the regulation of nutrient-sensitive gene expression availability in a mTOR-dependent manner. Seems to be a scaffolding protein able to assemble a prefoldin-like complex that contains PFDs and proteins with roles in transcription and ubiquitination. The protein is Unconventional prefoldin RPB5 interactor 1 (URI1) of Homo sapiens (Human).